The chain runs to 388 residues: Transposase for insertion sequence element IS406 (388 aa).

This sequence belongs to the transposase mutator family.

In terms of biological role, required for the transposition of the insertion element. In Burkholderia multivorans (strain ATCC 17616 / 249), this protein is Transposase for insertion sequence element IS406.